The chain runs to 30 residues: Hainantoxin F6-34.84 (30 aa).

2 disulfides stabilise this stretch: cysteine 2-cysteine 15 and cysteine 9-cysteine 24.

Belongs to the AVIT (prokineticin) family. In terms of tissue distribution, expressed by the venom gland.

It is found in the secreted. This Cyriopagopus hainanus (Chinese bird spider) protein is Hainantoxin F6-34.84.